The chain runs to 796 residues: Volume-regulated anion channel subunit LRRC8E (796 aa).

Topologically, residues M1–P22 are cytoplasmic. A helical transmembrane segment spans residues W23 to C43. Residues T44–K116 lie on the Extracellular side of the membrane. C54 and C301 are oxidised to a cystine. N-linked (GlcNAc...) asparagine glycosylation occurs at N63. Residues Y117–F137 form a helical membrane-spanning segment. The Cytoplasmic portion of the chain corresponds to K138–K265. A helical transmembrane segment spans residues F266–C286. Residues R287–A313 lie on the Extracellular side of the membrane. N302 carries N-linked (GlcNAc...) asparagine glycosylation. The helical transmembrane segment at F314–L334 threads the bilayer. The Cytoplasmic segment spans residues F335–E796. 11 LRR repeats span residues G508–E529, Q536–A557, H559–K579, A583–L604, A606–Q627, K631–L652, S654–C675, G677–L698, N700–C721, K723–L744, and A746–C767.

It belongs to the LRRC8 family. As to quaternary structure, heterohexamer; oligomerizes with other LRRC8 proteins (LRRC8A, LRRC8C, LRRC8D and/or LRRC8B) to form a heterohexamer. In vivo, the subunit composition may depend primarily on expression levels, and heterooligomeric channels containing various proportions of the different LRRC8 proteins may coexist.

Its subcellular location is the cell membrane. The protein localises to the endoplasmic reticulum membrane. It is found in the lysosome membrane. The enzyme catalyses chloride(in) = chloride(out). The catalysed reaction is iodide(out) = iodide(in). It carries out the reaction taurine(out) = taurine(in). It catalyses the reaction 2',3'-cGAMP(out) = 2',3'-cGAMP(in). Non-essential component of the volume-regulated anion channel (VRAC, also named VSOAC channel), an anion channel required to maintain a constant cell volume in response to extracellular or intracellular osmotic changes. The VRAC channel conducts iodide better than chloride and can also conduct organic osmolytes like taurine. Mediates efflux of amino acids, such as aspartate, in response to osmotic stress. The VRAC channel also mediates transport of immunoreactive cyclic dinucleotide GMP-AMP (2'-3'-cGAMP), an immune messenger produced in response to DNA virus in the cytosol. Channel activity requires LRRC8A plus at least one other family member (LRRC8B, LRRC8C, LRRC8D or LRRC8E); channel characteristics depend on the precise subunit composition. Also plays a role in lysosome homeostasis by forming functional lysosomal VRAC channels in response to low cytoplasmic ionic strength condition: lysosomal VRAC channels are necessary for the formation of large lysosome-derived vacuoles, which store and then expel excess water to maintain cytosolic water homeostasis. This Homo sapiens (Human) protein is Volume-regulated anion channel subunit LRRC8E.